A 365-amino-acid chain; its full sequence is MAVMAPRTLLLLLSGALALTQTWAGSHSMRYFFTSVSRPGRGEPRFIAVGYVDDTQFVRFDSDAASQRMEPRAPWIEQEGPEYWDQETRNVKAQSQTDRVDLGTLRGYYNQSEAGSHTIQIMYGCDVGSDGRFLRGYRQDAYDGKDYIALNEDLRSWTAADMAAQITKRKWEAAHEAEQLRAYLDGTCVEWLRRYLENGKETLQRTDPPKTHMTHHPISDHEATLRCWALGFYPAEITLTWQRDGEDQTQDTELVETRPAGDGTFQKWAAVVVPSGEEQRYTCHVQHEGLPKPLTLRWELSSQPTIPIVGIIAGLVLLGAVITGAVVAAVMWRRKSSDRKGGSYTQAASSDSAQGSDVSLTACKV.

Positions 1-24 (MAVMAPRTLLLLLSGALALTQTWA) are cleaved as a signal peptide. Residues 3–11 (VMAPRTLLL) are VL9 epitope. Residues 25–114 (GSHSMRYFFT…LRGYYNQSEA (90 aa)) form an alpha-1 region. Residues 25-308 (GSHSMRYFFT…ELSSQPTIPI (284 aa)) lie on the Extracellular side of the membrane. Y31 is a binding site for a peptide antigen. Sulfotyrosine is present on Y83. The a peptide antigen site is built by T97 and Y108. Residue N110 is glycosylated (N-linked (GlcNAc...) asparagine). The tract at residues 115–206 (GSHTIQIMYG…ENGKETLQRT (92 aa)) is alpha-2. C125 and C188 form a disulfide bridge. Positions 140, 167, 170, 183, and 195 each coordinate a peptide antigen. Residues 207-298 (DPPKTHMTHH…GLPKPLTLRW (92 aa)) are alpha-3. An Ig-like C1-type domain is found at 209-295 (PKTHMTHHPI…QHEGLPKPLT (87 aa)). C227 and C283 are joined by a disulfide. A connecting peptide region spans residues 299-308 (ELSSQPTIPI). The helical transmembrane segment at 309 to 332 (VGIIAGLVLLGAVITGAVVAAVMW) threads the bilayer. Residues 333-365 (RRKSSDRKGGSYTQAASSDSAQGSDVSLTACKV) lie on the Cytoplasmic side of the membrane. The segment at 339–365 (RKGGSYTQAASSDSAQGSDVSLTACKV) is disordered. S343 carries the post-translational modification Phosphoserine. At Y344 the chain carries Phosphotyrosine. The span at 346 to 359 (QAASSDSAQGSDVS) shows a compositional bias: low complexity. A phosphoserine mark is found at S349, S350, S352, S356, and S359.

This sequence belongs to the MHC class I family. Heterotrimer that consists of an alpha chain HLA-A, a beta chain B2M and a peptide (peptide-HLA-A-B2M). Early in biogenesis, HLA-A-B2M dimer interacts with the components of the peptide-loading complex composed of TAPBP, TAP1-TAP2, TAPBPL, PDIA3/ERP57 and CALR. Interacts with TAP1-TAP2 transporter via TAPBP; this interaction is obligatory for the loading of peptide epitopes delivered to the ER by TAP1-TAP2 transporter. Interacts with TAPBPL; TAPBPL binds peptide-free HLA-A-B2M complexes or those loaded with low affinity peptides, likely facilitating peptide exchange for higher affinity peptides. Only optimally assembled peptide-HLA-B2M trimer translocates to the surface of antigen-presenting cells, where it interacts with TCR and CD8 coreceptor on the surface of T cells. HLA-A (via polymorphic alpha-1 and alpha-2 domains) interacts with antigen-specific TCR (via CDR3 domains). One HLA-A molecule (mainly via nonpolymorphic alpha-3 domain) interacts with one CD8A homodimer (via CDR-like loop); this interaction ensures peptide-HLA-A-B2M recognition by CD8-positive T cells only. Alleles A*23:01; A*24:02 and A*32:01 interact (via Bw4 motif) with KIR3DL1 on NK cells; this interaction is direct. As to quaternary structure, (Microbial infection) Interacts with HHV-8 MIR1 protein. In terms of assembly, (Microbial infection) Interacts with HTLV-1 accessory protein p12I. In terms of processing, (Microbial infection) Polyubiquitinated in a post ER compartment by interaction with human herpesvirus 8 MIR1 protein. This targets the protein for rapid degradation via the ubiquitin system. N-linked glycosylation at Asn-110. Ubiquitous.

It localises to the cell membrane. Its subcellular location is the endoplasmic reticulum membrane. Its function is as follows. Antigen-presenting major histocompatibility complex class I (MHCI) molecule. In complex with B2M/beta 2 microglobulin displays primarily viral and tumor-derived peptides on antigen-presenting cells for recognition by alpha-beta T cell receptor (TCR) on HLA-A-restricted CD8-positive T cells, guiding antigen-specific T cell immune response to eliminate infected or transformed cells. May also present self-peptides derived from the signal sequence of secreted or membrane proteins, although T cells specific for these peptides are usually inactivated to prevent autoreactivity. Both the peptide and the MHC molecule are recognized by TCR, the peptide is responsible for the fine specificity of antigen recognition and MHC residues account for the MHC restriction of T cells. Typically presents intracellular peptide antigens of 8 to 13 amino acids that arise from cytosolic proteolysis via IFNG-induced immunoproteasome or via endopeptidase IDE/insulin-degrading enzyme. Can bind different peptides containing allele-specific binding motifs, which are mainly defined by anchor residues at position 2 and 9. Allele A*01:01: Presents a restricted peptide repertoire including viral epitopes derived from IAV NP/nucleoprotein (CTELKLSDY), IAV PB1/polymerase basic protein 1 (VSDGGPNLY), HAdV-11 capsid L3/hexon protein (LTDLGQNLLY), SARS-CoV-2 3a/ORF3a (FTSDYYQLY) as well as tumor peptide antigens including MAGE1 (EADPTGHSY), MAGEA3 (EVDPIGHLY) and WT1 (TSEKRPFMCAY), all having in common a canonical motif with a negatively charged Asp or Glu residue at position 3 and a Tyr anchor residue at the C-terminus. A number of HLA-A*01:01-restricted peptides carry a post-translational modification with oxidation and N-terminal acetylation being the most frequent. Fails to present highly immunogenic peptides from the EBV latent antigens. In terms of biological role, allele A*02:01: A major allele in human populations, presents immunodominant viral epitopes derived from IAV M/matrix protein 1 (GILGFVFTL), HIV-1 env (TLTSCNTSV), HIV-1 gag-pol (ILKEPVHGV), HTLV-1 Tax (LLFGYPVYV), HBV C/core antigen (FLPSDFFPS), HCMV UL83/pp65 (NLVPMVATV) as well as tumor peptide antigens including MAGEA4 (GVYDGREHTV), WT1 (RMFPNAPYL) and CTAG1A/NY-ESO-1 (SLLMWITQC), all having in common hydrophobic amino acids at position 2 and at the C-terminal anchors. Functionally, allele A*03:01: Presents viral epitopes derived from IAV NP (ILRGSVAHK), HIV-1 nef (QVPLRPMTYK), HIV-1 gag-pol (AIFQSSMTK), SARS-CoV-2 N/nucleoprotein (KTFPPTEPK) as well as tumor peptide antigens including PMEL (LIYRRRLMK), NODAL (HAYIQSLLK), TRP-2 (RMYNMVPFF), all having in common hydrophobic amino acids at position 2 and Lys or Arg anchor residues at the C-terminus. May also display spliced peptides resulting from the ligation of two separate proteasomal cleavage products that are not contiguous in the parental protein. Its function is as follows. Allele A*11:01: Presents several immunodominant epitopes derived from HIV-1 gag-pol and HHV-4 EBNA4, containing the peptide motif with Val, Ile, Thr, Leu, Tyr or Phe at position 2 and Lys anchor residue at the C-terminus. Important in the control of HIV-1, EBV and HBV infections. Presents an immunodominant epitope derived from SARS-CoV-2 N/nucleoprotein (KTFPPTEPK). Allele A*23:01: Interacts with natural killer (NK) cell receptor KIR3DL1 and may contribute to functional maturation of NK cells and self-nonself discrimination during innate immune response. In terms of biological role, allele A*24:02: Presents viral epitopes derived from HIV-1 nef (RYPLTFGWCF), EBV lytic- and latent-cycle antigens BRLF1 (TYPVLEEMF), BMLF1 (DYNFVKQLF) and LMP2 (IYVLVMLVL), SARS-CoV nucleocapsid/N (QFKDNVILL), as well as tumor peptide antigens including PRAME (LYVDSLFFL), all sharing a common signature motif, namely an aromatic residue Tyr or Phe at position 2 and a nonhydrophobic anchor residue Phe, Leu or Iso at the C-terminus. Interacts with natural killer (NK) cell receptor KIR3DL1 and may contribute to functional maturation of NK cells and self-nonself discrimination during innate immune response. Functionally, allele A*26:01: Presents several epitopes derived from HIV-1 gag-pol (EVIPMFSAL, ETKLGKAGY) and env (LVSDGGPNLY), carrying as anchor residues preferentially Glu at position 1, Val or Thr at position 2 and Tyr at the C-terminus. Its function is as follows. Allele A*29:02: Presents peptides having a common motif, namely a Glu residue at position 2 and Tyr or Leu anchor residues at the C-terminus. Allele A*32:01: Interacts with natural killer (NK) cell receptor KIR3DL1 and may contribute to functional maturation of NK cells and self-nonself discrimination during innate immune response. In terms of biological role, allele A*68:01: Presents viral epitopes derived from IAV NP (KTGGPIYKR) and HIV-1 tat (ITKGLGISYGR), having a common signature motif namely, Val or Thr at position 2 and positively charged residues Arg or Lys at the C-terminal anchor. Functionally, allele A*74:01: Presents immunodominant HIV-1 epitopes derived from gag-pol (GQMVHQAISPR, QIYPGIKVR) and rev (RQIHSISER), carrying an aliphatic residue at position 2 and Arg anchor residue at the C-terminus. May contribute to viral load control in chronic HIV-1 infection. This Homo sapiens (Human) protein is HLA class I histocompatibility antigen, A alpha chain.